The sequence spans 590 residues: Membrane protein insertase YidC (590 aa).

5 helical membrane passes run 5–25 (SVIG…FMKP), 368–388 (GLII…LSLA), 433–453 (LGGC…FYVF), 483–503 (LPLY…TVFF), and 519–539 (IMMW…PAGL).

It belongs to the OXA1/ALB3/YidC family. Type 1 subfamily. In terms of assembly, interacts with the Sec translocase complex via SecD. Specifically interacts with transmembrane segments of nascent integral membrane proteins during membrane integration.

It localises to the cell inner membrane. In terms of biological role, required for the insertion and/or proper folding and/or complex formation of integral membrane proteins into the membrane. Involved in integration of membrane proteins that insert both dependently and independently of the Sec translocase complex, as well as at least some lipoproteins. Aids folding of multispanning membrane proteins. The sequence is that of Membrane protein insertase YidC from Chlorobaculum tepidum (strain ATCC 49652 / DSM 12025 / NBRC 103806 / TLS) (Chlorobium tepidum).